The sequence spans 444 residues: CCA-adding enzyme (444 aa).

ATP-binding residues include Ser-57 and Arg-60. 2 residues coordinate CTP: Ser-57 and Arg-60. Mg(2+) is bound by residues Asp-69, Asp-71, and Asp-124. Residues His-147, Lys-168, and Tyr-177 each contribute to the ATP site. CTP-binding residues include His-147, Lys-168, and Tyr-177.

The protein belongs to the tRNA nucleotidyltransferase/poly(A) polymerase family. Archaeal CCA-adding enzyme subfamily. In terms of assembly, homodimer. Mg(2+) is required as a cofactor.

The enzyme catalyses a tRNA precursor + 2 CTP + ATP = a tRNA with a 3' CCA end + 3 diphosphate. It catalyses the reaction a tRNA with a 3' CCA end + 2 CTP + ATP = a tRNA with a 3' CCACCA end + 3 diphosphate. Catalyzes the addition and repair of the essential 3'-terminal CCA sequence in tRNAs without using a nucleic acid template. Adds these three nucleotides in the order of C, C, and A to the tRNA nucleotide-73, using CTP and ATP as substrates and producing inorganic pyrophosphate. tRNA 3'-terminal CCA addition is required both for tRNA processing and repair. Also involved in tRNA surveillance by mediating tandem CCA addition to generate a CCACCA at the 3' terminus of unstable tRNAs. While stable tRNAs receive only 3'-terminal CCA, unstable tRNAs are marked with CCACCA and rapidly degraded. In Methanococcus maripaludis (strain C5 / ATCC BAA-1333), this protein is CCA-adding enzyme.